We begin with the raw amino-acid sequence, 242 residues long: Sugar fermentation stimulation protein homolog (242 aa).

It belongs to the SfsA family.

This chain is Sugar fermentation stimulation protein homolog, found in Rippkaea orientalis (strain PCC 8801 / RF-1) (Cyanothece sp. (strain PCC 8801)).